A 99-amino-acid polypeptide reads, in one-letter code: AVTKADVEQYDLANGKTVYDANCASCHAAGIMGAPKTGTARKWNSRLPQGLATMIEKSVAGYEGEYRGSKTFMPAKGGNPDLTDKQVGDAVAYMVNEVL.

Heme c is bound by residues Cys23, Cys26, His27, and Met73.

Post-translationally, binds 1 heme c group covalently per subunit.

This is Cytochrome c-555 from Prosthecochloris aestuarii.